Here is a 165-residue protein sequence, read N- to C-terminus: PARP-type zinc finger-containing protein C13F5.07c (165 aa).

The PARP-type; degenerate zinc-finger motif lies at tyrosine 8–histidine 100. Basic and acidic residues predominate over residues histidine 100–glutamate 114. Residues histidine 100–aspartate 165 form a disordered region. Polar residues predominate over residues asparagine 117–proline 128. Residues valine 131–threonine 141 show a composition bias toward basic residues. Acidic residues predominate over residues serine 149 to aspartate 165.

Its subcellular location is the cytoplasm. It is found in the nucleus. This chain is PARP-type zinc finger-containing protein C13F5.07c, found in Schizosaccharomyces pombe (strain 972 / ATCC 24843) (Fission yeast).